Here is a 483-residue protein sequence, read N- to C-terminus: tRNA sulfurtransferase (483 aa).

The THUMP domain occupies 61-165 (EAVCDALTRI…DDKLILVNAR (105 aa)). Residues 183–184 (LI), Lys265, Gly287, and Gln296 contribute to the ATP site. Cys344 and Cys456 form a disulfide bridge. Residues 404–483 (FATNDVVLDI…FNNVKVYRKK (80 aa)) enclose the Rhodanese domain. The active-site Cysteine persulfide intermediate is the Cys456.

The protein belongs to the ThiI family.

It is found in the cytoplasm. It catalyses the reaction [ThiI sulfur-carrier protein]-S-sulfanyl-L-cysteine + a uridine in tRNA + 2 reduced [2Fe-2S]-[ferredoxin] + ATP + H(+) = [ThiI sulfur-carrier protein]-L-cysteine + a 4-thiouridine in tRNA + 2 oxidized [2Fe-2S]-[ferredoxin] + AMP + diphosphate. The enzyme catalyses [ThiS sulfur-carrier protein]-C-terminal Gly-Gly-AMP + S-sulfanyl-L-cysteinyl-[cysteine desulfurase] + AH2 = [ThiS sulfur-carrier protein]-C-terminal-Gly-aminoethanethioate + L-cysteinyl-[cysteine desulfurase] + A + AMP + 2 H(+). Its pathway is cofactor biosynthesis; thiamine diphosphate biosynthesis. In terms of biological role, catalyzes the ATP-dependent transfer of a sulfur to tRNA to produce 4-thiouridine in position 8 of tRNAs, which functions as a near-UV photosensor. Also catalyzes the transfer of sulfur to the sulfur carrier protein ThiS, forming ThiS-thiocarboxylate. This is a step in the synthesis of thiazole, in the thiamine biosynthesis pathway. The sulfur is donated as persulfide by IscS. In Proteus mirabilis (strain HI4320), this protein is tRNA sulfurtransferase.